We begin with the raw amino-acid sequence, 804 residues long: G-type lectin S-receptor-like serine/threonine-protein kinase At1g61500 (804 aa).

The signal sequence occupies residues 1–24; that stretch reads MMTRFACLHLFTMFLFTLLSGSSS. The region spanning 25–145 is the Bulb-type lectin domain; that stretch reads AVITTESPLS…VSERALWQSF (121 aa). The Extracellular segment spans residues 25–427; that stretch reads AVITTESPLS…ELDGNKRKKT (403 aa). 3 N-linked (GlcNAc...) asparagine glycosylation sites follow: Asn-54, Asn-135, and Asn-237. Residues 279 to 315 enclose the EGF-like; atypical domain; that stretch reads PKKLCDFYGACGPFGLCVMSPSPMCKCFRGFVPKSVE. 2 cysteine pairs are disulfide-bonded: Cys-283-Cys-295 and Cys-289-Cys-303. Asn-321, Asn-337, and Asn-376 each carry an N-linked (GlcNAc...) asparagine glycan. The 83-residue stretch at 334 to 416 folds into the PAN domain; the sequence is CLGNSTGEDA…GELLSIRLAR (83 aa). Cystine bridges form between Cys-369/Cys-390 and Cys-373/Cys-379. A helical membrane pass occupies residues 428-448; it reads IVASIVSLTLFMILGFTAFGV. Residues 449-804 are Cytoplasmic-facing; that stretch reads WRCRVEHIAH…GMTQSVILGR (356 aa). Residues 491–776 form the Protein kinase domain; that stretch reads FSLSNKLGQG…DLPSPKQPTF (286 aa). ATP-binding positions include 497–505 and Lys-519; that span reads LGQGGFGSV. Residues Ser-525 and Ser-540 each carry the phosphoserine modification. The tract at residues 580–597 is caM-binding; the sequence is RKRLEIDWPKRFDIIQGI. The active-site Proton acceptor is Asp-616. Residues Ser-620 and Ser-633 each carry the phosphoserine modification. The residue at position 650 (Thr-650) is a Phosphothreonine. Phosphoserine is present on residues Ser-693 and Ser-787.

It belongs to the protein kinase superfamily. Ser/Thr protein kinase family.

It is found in the cell membrane. It catalyses the reaction L-seryl-[protein] + ATP = O-phospho-L-seryl-[protein] + ADP + H(+). The catalysed reaction is L-threonyl-[protein] + ATP = O-phospho-L-threonyl-[protein] + ADP + H(+). In Arabidopsis thaliana (Mouse-ear cress), this protein is G-type lectin S-receptor-like serine/threonine-protein kinase At1g61500.